We begin with the raw amino-acid sequence, 213 residues long: tRNA (guanine-N(7)-)-methyltransferase (213 aa).

S-adenosyl-L-methionine contacts are provided by Glu44, Glu69, Asp96, and Asp118. Residue Asp118 is part of the active site. A substrate-binding site is contributed by Lys122. Residues 124–129 are interaction with RNA; sequence RHEKRR. Substrate-binding positions include Asp154 and 191-194; that span reads TEYE.

Belongs to the class I-like SAM-binding methyltransferase superfamily. TrmB family. Homodimer.

The enzyme catalyses guanosine(46) in tRNA + S-adenosyl-L-methionine = N(7)-methylguanosine(46) in tRNA + S-adenosyl-L-homocysteine. Its pathway is tRNA modification; N(7)-methylguanine-tRNA biosynthesis. Functionally, catalyzes the formation of N(7)-methylguanine at position 46 (m7G46) in tRNA. This chain is tRNA (guanine-N(7)-)-methyltransferase, found in Bacillus subtilis (strain 168).